A 428-amino-acid chain; its full sequence is Elongation factor 1-alpha (428 aa).

The 211-residue stretch at 5–215 folds into the tr-type G domain; the sequence is KPHVNIVFIG…ALDQIPEPPK (211 aa). Positions 14 to 21 are G1; it reads GHVDHGKS. 14 to 21 contacts GTP; it reads GHVDHGKS. Ser-21 is a binding site for Mg(2+). The segment at 68-72 is G2; sequence GITID. The tract at residues 89–92 is G3; the sequence is DAPG. Residues 89-93 and 144-147 each bind GTP; these read DAPGH and NKMD. A G4 region spans residues 144-147; sequence NKMD. The segment at 181-183 is G5; the sequence is SAW.

This sequence belongs to the TRAFAC class translation factor GTPase superfamily. Classic translation factor GTPase family. EF-Tu/EF-1A subfamily.

The protein localises to the cytoplasm. The catalysed reaction is GTP + H2O = GDP + phosphate + H(+). In terms of biological role, GTP hydrolase that promotes the GTP-dependent binding of aminoacyl-tRNA to the A-site of ribosomes during protein biosynthesis. The chain is Elongation factor 1-alpha from Thermococcus kodakarensis (strain ATCC BAA-918 / JCM 12380 / KOD1) (Pyrococcus kodakaraensis (strain KOD1)).